Here is a 294-residue protein sequence, read N- to C-terminus: Shikimate dehydrogenase (NADP(+)) (294 aa).

Shikimate contacts are provided by residues S22 to S24 and S69. K73 serves as the catalytic Proton acceptor. Residues N94 and D111 each contribute to the shikimate site. NADP(+)-binding positions include G135 to A139 and L236. Y238 is a binding site for shikimate. Residue G260 coordinates NADP(+).

The protein belongs to the shikimate dehydrogenase family. As to quaternary structure, homodimer.

The catalysed reaction is shikimate + NADP(+) = 3-dehydroshikimate + NADPH + H(+). It participates in metabolic intermediate biosynthesis; chorismate biosynthesis; chorismate from D-erythrose 4-phosphate and phosphoenolpyruvate: step 4/7. In terms of biological role, involved in the biosynthesis of the chorismate, which leads to the biosynthesis of aromatic amino acids. Catalyzes the reversible NADPH linked reduction of 3-dehydroshikimate (DHSA) to yield shikimate (SA). The chain is Shikimate dehydrogenase (NADP(+)) from Streptococcus equi subsp. zooepidemicus (strain MGCS10565).